We begin with the raw amino-acid sequence, 414 residues long: Serine/arginine (SR)-type shuttling mRNA binding protein NPL3 (414 aa).

Residues 1-11 (MSEAQETHVEQ) show a composition bias toward basic and acidic residues. A disordered region spans residues 1-119 (MSEAQETHVE…GRPPMHHRQE (119 aa)). A Phosphoserine modification is found at Ser-15. A compositionally biased stretch (low complexity) spans 33–51 (DAPQEPQVPQESAPQESAP). Positions 52 to 68 (QEPPAPQEQNDVPPPSN) are enriched in pro residues. Positions 75–92 (EESHSVQDYQEAHQHHQP) are enriched in basic and acidic residues. Ser-79 is subject to Phosphoserine. Pro residues predominate over residues 93–105 (PEPQPYYPPPPPG). 2 consecutive RRM domains span residues 125-195 (TRLF…YSKL) and 200-275 (YRIT…RDDN). A phosphoserine mark is found at Ser-182, Ser-212, and Ser-224. The segment at 269-299 (TVERDDNPPPIRRSNRGGFRGRGGFRGGFRG) is disordered. A compositionally biased stretch (gly residues) spans 286 to 299 (GFRGRGGFRGGFRG). Dimethylated arginine occurs at positions 288, 290, 294, and 298. Arg-302 bears the Omega-N-methylarginine mark. Dimethylated arginine; alternate is present on residues Arg-307 and Arg-314. Arg-307 and Arg-314 each carry omega-N-methylarginine; alternate. 4 positions are modified to omega-N-methylarginine: Arg-321, Arg-329, Arg-337, and Arg-344. The disordered stretch occupies residues 343–414 (SRGGYDSPRG…DAPRERSPTR (72 aa)). Residues 346-360 (GYDSPRGGYDSPRGG) are compositionally biased toward low complexity. Arg-351 is subject to Dimethylated arginine; alternate. Arg-351 carries the omega-N-methylarginine; alternate modification. Residue Ser-356 is modified to Phosphoserine. Dimethylated arginine; alternate occurs at positions 358, 363, 377, and 384. An omega-N-methylarginine; alternate mark is found at Arg-358, Arg-363, Arg-377, and Arg-384. The span at 379-389 (SYGGSRGGYDG) shows a compositional bias: gly residues. The residue at position 391 (Arg-391) is an Omega-N-methylarginine. Over residues 399-414 (DAYRTRDAPRERSPTR) the composition is skewed to basic and acidic residues.

Belongs to the RRM GAR family. As to quaternary structure, interacts with RRP6. Methylated by HMT1. The methylation is required for nuclear export.

The protein localises to the cytoplasm. The protein resides in the nucleus. Its subcellular location is the stress granule. Its function is as follows. Involved in mRNA processing and export. Required for efficient splicing of a large set of pre-mRNAs by efficient co-transcriptional recruitment of the splicing machinery. Remains associated with the mRNP during early steps of translation elongation. This chain is Serine/arginine (SR)-type shuttling mRNA binding protein NPL3, found in Saccharomyces cerevisiae (strain ATCC 204508 / S288c) (Baker's yeast).